We begin with the raw amino-acid sequence, 3305 residues long: Apolipophorins (3305 aa).

Positions 1 to 23 are cleaved as a signal peptide; sequence MGKSNRLLSVLFVISVLWKAAYG. Residues 39-640 enclose the Vitellogenin domain; sequence FAAGQKYNYG…SQTSFLPRSV (602 aa). Residues Asn643 and Asn2769 are each glycosylated (N-linked (GlcNAc...) asparagine). In terms of domain architecture, VWFD spans 2733–2899; sequence LRAVVVNGQH…NSYRLSRSCP (167 aa). A disulfide bond links Cys2757 and Cys2898.

Cleaved into 2 chains by furin protease. However, prevention of cleavage does not impair its function. In terms of processing, N-glycosylated.

The protein localises to the secreted. Its function is as follows. Constitutes the major component of lipophorin, which mediates transport for various types of lipids in hemolymph. Acts by forming lipoprotein particles that bind lipoproteins and lipids. May be required for morphogens wingless (wg) and hedgehog (hh) function, possibly by acting as vehicles for the movement of wg and hh. The chain is Apolipophorins from Manduca sexta (Tobacco hawkmoth).